A 419-amino-acid polypeptide reads, in one-letter code: Dual specificity protein phosphatase 7 (419 aa).

Residues 1–47 are disordered; that stretch reads MKNQLRGPPARAHMSTSGAAAAGGTRAGSEPGAGSGSGAGTGAGAAT. Low complexity predominate over residues 10-29; the sequence is ARAHMSTSGAAAAGGTRAGS. Residues 31 to 47 show a composition bias toward gly residues; sequence PGAGSGSGAGTGAGAAT. The Rhodanese domain maps to 68-187; sequence GGASLLLLDC…FQTEYSEHCE (120 aa). Positions 216–240 are disordered; it reads CSDGESDRELPSSATESDGSPVPSS. Residues 227–240 show a composition bias toward polar residues; that stretch reads SSATESDGSPVPSS. In terms of domain architecture, Tyrosine-protein phosphatase spans 244 to 387; the sequence is FPVQILPYLY…LLDFERTLGL (144 aa). Cysteine 331 acts as the Phosphocysteine intermediate in catalysis. 331-337 serves as a coordination point for substrate; that stretch reads CLAGISR.

Belongs to the protein-tyrosine phosphatase family. Non-receptor class dual specificity subfamily. Interacts with MAPK1/ERK2; the interaction enhances DUSP7 phosphatase activity. Strongly expressed in liver. Expressed at significantly higher levels in malignant hematopoietic cells than in corresponding non-malignant cells.

The protein localises to the cytoplasm. It catalyses the reaction O-phospho-L-tyrosyl-[protein] + H2O = L-tyrosyl-[protein] + phosphate. The catalysed reaction is O-phospho-L-seryl-[protein] + H2O = L-seryl-[protein] + phosphate. It carries out the reaction O-phospho-L-threonyl-[protein] + H2O = L-threonyl-[protein] + phosphate. Its activity is regulated as follows. Strongly inhibited by sodium orthovanadate. In terms of biological role, dual specificity protein phosphatase. Shows high activity towards MAPK1/ERK2. Also has lower activity towards MAPK14 and MAPK8. In arrested oocytes, plays a role in meiotic resumption. Promotes nuclear envelope breakdown and activation of the CDK1/Cyclin-B complex in oocytes, probably by dephosphorylating and inactivating the conventional protein kinase C (cPKC) isozyme PRKCB. May also inactivate PRKCA and/or PRKCG. Also important in oocytes for normal chromosome alignment on the metaphase plate and progression to anaphase, where it might regulate activity of the spindle-assembly checkpoint (SAC) complex. The chain is Dual specificity protein phosphatase 7 from Homo sapiens (Human).